The chain runs to 460 residues: ATP synthase subunit beta (460 aa).

Gly150–Thr157 serves as a coordination point for ATP.

It belongs to the ATPase alpha/beta chains family. In terms of assembly, F-type ATPases have 2 components, CF(1) - the catalytic core - and CF(0) - the membrane proton channel. CF(1) has five subunits: alpha(3), beta(3), gamma(1), delta(1), epsilon(1). CF(0) has three main subunits: a(1), b(2) and c(9-12). The alpha and beta chains form an alternating ring which encloses part of the gamma chain. CF(1) is attached to CF(0) by a central stalk formed by the gamma and epsilon chains, while a peripheral stalk is formed by the delta and b chains.

It is found in the cell inner membrane. The catalysed reaction is ATP + H2O + 4 H(+)(in) = ADP + phosphate + 5 H(+)(out). Produces ATP from ADP in the presence of a proton gradient across the membrane. The catalytic sites are hosted primarily by the beta subunits. The protein is ATP synthase subunit beta of Pectobacterium carotovorum subsp. carotovorum (strain PC1).